Here is a 563-residue protein sequence, read N- to C-terminus: NAD-dependent malic enzyme (563 aa).

Y101 (proton donor) is an active-site residue. R154 is an NAD(+) binding site. The Proton acceptor role is filled by K172. A divalent metal cation contacts are provided by E243, D244, and D267. NAD(+)-binding residues include D267 and N416.

The protein belongs to the malic enzymes family. As to quaternary structure, homotetramer. Requires Mg(2+) as cofactor. The cofactor is Mn(2+).

The catalysed reaction is (S)-malate + NAD(+) = pyruvate + CO2 + NADH. The enzyme catalyses oxaloacetate + H(+) = pyruvate + CO2. This chain is NAD-dependent malic enzyme, found in Pseudomonas syringae pv. syringae (strain B728a).